The following is a 714-amino-acid chain: DNA gyrase subunit B (714 aa).

Positions 492–606 constitute a Toprim domain; it reads SELYVVEGDS…NGHVFLAQPP (115 aa). Mg(2+) is bound by residues E498, D571, and D573.

This sequence belongs to the type II topoisomerase GyrB family. Heterotetramer, composed of two GyrA and two GyrB chains. In the heterotetramer, GyrA contains the active site tyrosine that forms a transient covalent intermediate with DNA, while GyrB binds cofactors and catalyzes ATP hydrolysis. Mg(2+) is required as a cofactor. It depends on Mn(2+) as a cofactor. Ca(2+) serves as cofactor.

It localises to the cytoplasm. The enzyme catalyses ATP-dependent breakage, passage and rejoining of double-stranded DNA.. With respect to regulation, DNA supercoiling is inhibited by EDTA, novobiocin, coumermycin and ciprofloxacin. Its function is as follows. A type II topoisomerase that negatively supercoils closed circular double-stranded DNA in an ATP-dependent manner and also catalyzes the interconversion of other topological isomers of double-stranded DNA rings, including catenanes and knotted rings. Relaxes negatively supercoiled DNA in an ATP-independent manner. A linear reaction intermediate can be trapped in the presence of the antibiotic ciprofloxacin. Negative supercoiling favors strand separation, and DNA replication, transcription, recombination and repair, all of which involve strand separation. Type II topoisomerases break and join 2 DNA strands simultaneously in an ATP-dependent manner. This chain is DNA gyrase subunit B, found in Mycobacterium bovis (strain BCG / Pasteur 1173P2).